The primary structure comprises 134 residues: Putative cytochrome c oxidase subunit 6b-like (134 aa).

A disordered region spans residues 1–61 (MSSAQMDPHD…DSGRETDAAV (61 aa)). Basic and acidic residues-rich tracts occupy residues 7 to 19 (DPHDKMRSRDISK) and 44 to 61 (ATFRAKRGDSGRETDAAV). A CHCH domain is found at 71–114 (TRHCFNRFMQYHKCIEKNGRDANDCNNLRDYVRSICPEELVSKI). Positions 74–84 (CFNRFMQYHKC) match the Cx9C motif motif. 2 cysteine pairs are disulfide-bonded: C74/C106 and C84/C95. The Cx10C motif signature appears at 95-106 (CNNLRDYVRSIC).

It belongs to the cytochrome c oxidase subunit 6B (TC 3.D.4.8) family.

The protein resides in the mitochondrion. This protein is one of the nuclear-coded polypeptide chains of cytochrome c oxidase, the terminal oxidase in mitochondrial electron transport. This protein may be one of the heme-binding subunits of the oxidase. The sequence is that of Putative cytochrome c oxidase subunit 6b-like from Arabidopsis thaliana (Mouse-ear cress).